A 245-amino-acid chain; its full sequence is Acetylglutamate kinase (245 aa).

Substrate contacts are provided by residues 41 to 42 (GG), arginine 63, and asparagine 156.

This sequence belongs to the acetylglutamate kinase family. ArgB subfamily.

It localises to the cytoplasm. The enzyme catalyses N-acetyl-L-glutamate + ATP = N-acetyl-L-glutamyl 5-phosphate + ADP. Its pathway is amino-acid biosynthesis; L-arginine biosynthesis; N(2)-acetyl-L-ornithine from L-glutamate: step 2/4. Catalyzes the ATP-dependent phosphorylation of N-acetyl-L-glutamate. The sequence is that of Acetylglutamate kinase from Streptococcus mutans serotype c (strain ATCC 700610 / UA159).